A 447-amino-acid chain; its full sequence is Signal recognition particle 54 kDa protein (447 aa).

Residues 105–112 (GVQGSGKT), 187–191 (DTAGR), and 247–250 (TKMD) contribute to the GTP site.

This sequence belongs to the GTP-binding SRP family. SRP54 subfamily. In terms of assembly, part of the signal recognition particle protein translocation system, which is composed of SRP and FtsY. Archaeal SRP consists of a 7S RNA molecule of 300 nucleotides and two protein subunits: SRP54 and SRP19.

It localises to the cytoplasm. It catalyses the reaction GTP + H2O = GDP + phosphate + H(+). In terms of biological role, involved in targeting and insertion of nascent membrane proteins into the cytoplasmic membrane. Binds to the hydrophobic signal sequence of the ribosome-nascent chain (RNC) as it emerges from the ribosomes. The SRP-RNC complex is then targeted to the cytoplasmic membrane where it interacts with the SRP receptor FtsY. The protein is Signal recognition particle 54 kDa protein of Hyperthermus butylicus (strain DSM 5456 / JCM 9403 / PLM1-5).